The primary structure comprises 684 residues: Nuclear transcription factor Y subunit gamma (684 aa).

Disordered stretches follow at residues 1 to 74 (MENQ…NIST), 112 to 238 (MNSP…SSFQ), 414 to 487 (HSPQ…TQQL), and 511 to 650 (QQQQ…KNDE). Low complexity predominate over residues 21 to 49 (SNSHNNHHNNNNNNNYNNNNNNNINNINN). Over residues 58 to 74 (KSIQQHSPHSSTPNIST) the composition is skewed to polar residues. The span at 142-162 (HQHPSSASSSSSSSSSSLSSS) shows a compositional bias: low complexity. Positions 163 to 176 (SHHHHSNHHHHHPN) are enriched in basic residues. Positions 188–203 (PSLNDSSSNGNGTPAL) are enriched in polar residues. Low complexity predominate over residues 220 to 238 (TPTSTPNQRFQSNGSSSFQ). Positions 414 to 423 (HSPQLQEQSS) are enriched in polar residues. A compositionally biased stretch (low complexity) spans 424-437 (NNNNNNNNNNNNNN). 2 stretches are compositionally biased toward polar residues: residues 438–456 (SVSVKRSYSMEIQNSSPLS) and 464–477 (SQDYNFQYNENNHN). 3 stretches are compositionally biased toward low complexity: residues 478-487 (QSSLSQTQQL), 511-522 (QQQQHSQQISQQ), and 529-637 (PSNS…NNNN).

Belongs to the NFYC/HAP5 subunit family. In terms of assembly, heterotrimeric transcription factor composed of three components, NF-YA, NF-YB and NF-YC. NF-YB and NF-YC must interact and dimerize for NF-YA association and DNA binding.

It is found in the nucleus. Its function is as follows. Stimulates the transcription of various genes by recognizing and binding to a CCAAT motif in promoters. The sequence is that of Nuclear transcription factor Y subunit gamma (nfyc-1) from Dictyostelium discoideum (Social amoeba).